Here is a 247-residue protein sequence, read N- to C-terminus: Phycocyanobilin:ferredoxin oxidoreductase (247 aa).

It belongs to the HY2 family.

The enzyme catalyses (2R,3Z)-phycocyanobilin + 4 oxidized [2Fe-2S]-[ferredoxin] = biliverdin IXalpha + 4 reduced [2Fe-2S]-[ferredoxin] + 4 H(+). Functionally, catalyzes the four-electron reduction of biliverdin IX-alpha (2-electron reduction at both the A and D rings); the reaction proceeds via an isolatable 2-electron intermediate, 181,182-dihydrobiliverdin. The polypeptide is Phycocyanobilin:ferredoxin oxidoreductase (pcyA) (Prochlorococcus marinus (strain SARG / CCMP1375 / SS120)).